Here is a 394-residue protein sequence, read N- to C-terminus: Flap endonuclease 1 (394 aa).

An N-domain region spans residues 1-104; it reads MGIKQLFTII…GELARRYQRK (104 aa). A Mg(2+)-binding site is contributed by Asp34. DNA is bound by residues Arg47 and Arg70. Asp86, Glu158, Glu160, Asp179, and Asp181 together coordinate Mg(2+). Residues 122–253 form an I-domain region; that stretch reads DVEKFSRRTV…STALKLIREH (132 aa). Position 158 (Glu158) interacts with DNA. 2 residues coordinate DNA: Gly231 and Asp233. Asp233 is a binding site for Mg(2+). Residues 340 to 348 form an interaction with PCNA region; sequence QQQRLEGFF. The tract at residues 358–394 is disordered; that stretch reads QKAHKRKLEVKAEEAKKKLKAEKKEKAKAKARPRGTA. Basic residues predominate over residues 374-394; the sequence is KKLKAEKKEKAKAKARPRGTA.

Belongs to the XPG/RAD2 endonuclease family. FEN1 subfamily. In terms of assembly, interacts with PCNA. Three molecules of FEN1 bind to one PCNA trimer with each molecule binding to one PCNA monomer. PCNA stimulates the nuclease activity without altering cleavage specificity. Mg(2+) serves as cofactor. Phosphorylated. Phosphorylation upon DNA damage induces relocalization to the nuclear plasma.

Its subcellular location is the nucleus. It is found in the nucleolus. The protein localises to the nucleoplasm. It localises to the mitochondrion. In terms of biological role, structure-specific nuclease with 5'-flap endonuclease and 5'-3' exonuclease activities involved in DNA replication and repair. During DNA replication, cleaves the 5'-overhanging flap structure that is generated by displacement synthesis when DNA polymerase encounters the 5'-end of a downstream Okazaki fragment. It enters the flap from the 5'-end and then tracks to cleave the flap base, leaving a nick for ligation. Also involved in the long patch base excision repair (LP-BER) pathway, by cleaving within the apurinic/apyrimidinic (AP) site-terminated flap. Acts as a genome stabilization factor that prevents flaps from equilibrating into structures that lead to duplications and deletions. Also possesses 5'-3' exonuclease activity on nicked or gapped double-stranded DNA, and exhibits RNase H activity. Also involved in replication and repair of rDNA and in repairing mitochondrial DNA. The polypeptide is Flap endonuclease 1 (Pyricularia oryzae (strain 70-15 / ATCC MYA-4617 / FGSC 8958) (Rice blast fungus)).